Reading from the N-terminus, the 298-residue chain is Protoheme IX farnesyltransferase (298 aa).

The next 9 helical transmembrane spans lie at 26 to 46 (VVGH…PGVP), 52 to 72 (FWAS…NHFL), 98 to 118 (VVGF…AFVN), 120 to 140 (LTAF…TVYL), 148 to 168 (IVIG…AVTG), 174 to 194 (ALLL…AYAI), 214 to 234 (IAFT…AGLM), 241 to 261 (SGEI…YYAI), and 278 to 298 (YSLV…YIVL).

The protein belongs to the UbiA prenyltransferase family. Protoheme IX farnesyltransferase subfamily.

The protein localises to the cell inner membrane. It catalyses the reaction heme b + (2E,6E)-farnesyl diphosphate + H2O = Fe(II)-heme o + diphosphate. Its pathway is porphyrin-containing compound metabolism; heme O biosynthesis; heme O from protoheme: step 1/1. Its function is as follows. Converts heme B (protoheme IX) to heme O by substitution of the vinyl group on carbon 2 of heme B porphyrin ring with a hydroxyethyl farnesyl side group. This is Protoheme IX farnesyltransferase from Methylococcus capsulatus (strain ATCC 33009 / NCIMB 11132 / Bath).